Here is a 366-residue protein sequence, read N- to C-terminus: tRNA/tmRNA (uracil-C(5))-methyltransferase (366 aa).

Gln189, Tyr217, Asn222, Glu238, and Asp298 together coordinate S-adenosyl-L-methionine. The active-site Nucleophile is the Cys323. Glu357 serves as the catalytic Proton acceptor.

Belongs to the class I-like SAM-binding methyltransferase superfamily. RNA M5U methyltransferase family. TrmA subfamily.

It catalyses the reaction uridine(54) in tRNA + S-adenosyl-L-methionine = 5-methyluridine(54) in tRNA + S-adenosyl-L-homocysteine + H(+). The enzyme catalyses uridine(341) in tmRNA + S-adenosyl-L-methionine = 5-methyluridine(341) in tmRNA + S-adenosyl-L-homocysteine + H(+). Functionally, dual-specificity methyltransferase that catalyzes the formation of 5-methyluridine at position 54 (m5U54) in all tRNAs, and that of position 341 (m5U341) in tmRNA (transfer-mRNA). This chain is tRNA/tmRNA (uracil-C(5))-methyltransferase, found in Shewanella putrefaciens (strain CN-32 / ATCC BAA-453).